The following is a 299-amino-acid chain: Ribosomal RNA small subunit methyltransferase H (299 aa).

Residues 36–38 (GGH), Asp55, Asp103, and Gln110 contribute to the S-adenosyl-L-methionine site. Basic and acidic residues-rich tracts occupy residues 268–282 (KPVR…ENPR) and 289–299 (RAAERIEKGGD). A disordered region spans residues 268-299 (KPVRPSEEEIRENPRARSGRLRAAERIEKGGD).

The protein belongs to the methyltransferase superfamily. RsmH family.

It is found in the cytoplasm. The enzyme catalyses cytidine(1402) in 16S rRNA + S-adenosyl-L-methionine = N(4)-methylcytidine(1402) in 16S rRNA + S-adenosyl-L-homocysteine + H(+). Specifically methylates the N4 position of cytidine in position 1402 (C1402) of 16S rRNA. In Thermotoga sp. (strain RQ2), this protein is Ribosomal RNA small subunit methyltransferase H.